Reading from the N-terminus, the 253-residue chain is 3-deoxy-manno-octulosonate cytidylyltransferase (253 aa).

It belongs to the KdsB family.

It is found in the cytoplasm. The enzyme catalyses 3-deoxy-alpha-D-manno-oct-2-ulosonate + CTP = CMP-3-deoxy-beta-D-manno-octulosonate + diphosphate. It participates in nucleotide-sugar biosynthesis; CMP-3-deoxy-D-manno-octulosonate biosynthesis; CMP-3-deoxy-D-manno-octulosonate from 3-deoxy-D-manno-octulosonate and CTP: step 1/1. Its pathway is bacterial outer membrane biogenesis; lipopolysaccharide biosynthesis. Activates KDO (a required 8-carbon sugar) for incorporation into bacterial lipopolysaccharide in Gram-negative bacteria. The protein is 3-deoxy-manno-octulosonate cytidylyltransferase of Neisseria meningitidis serogroup B (strain ATCC BAA-335 / MC58).